The sequence spans 449 residues: 23S rRNA (uracil(1939)-C(5))-methyltransferase RlmD (449 aa).

In terms of domain architecture, TRAM spans 1–66; sequence MGRSRYHNKL…AKFDEAKVVE (66 aa). Residues Cys79, Cys85, Cys88, and Cys169 each coordinate [4Fe-4S] cluster. Positions 280, 309, 314, 330, 357, and 379 each coordinate S-adenosyl-L-methionine. Catalysis depends on Cys405, which acts as the Nucleophile.

The protein belongs to the class I-like SAM-binding methyltransferase superfamily. RNA M5U methyltransferase family. RlmD subfamily.

It carries out the reaction uridine(1939) in 23S rRNA + S-adenosyl-L-methionine = 5-methyluridine(1939) in 23S rRNA + S-adenosyl-L-homocysteine + H(+). Functionally, catalyzes the formation of 5-methyl-uridine at position 1939 (m5U1939) in 23S rRNA. The protein is 23S rRNA (uracil(1939)-C(5))-methyltransferase RlmD of Francisella tularensis subsp. holarctica (strain LVS).